The following is an 87-amino-acid chain: Large ribosomal subunit protein bL27 (87 aa).

The disordered stretch occupies residues M1–V23. The span at T7–Q19 shows a compositional bias: polar residues.

The protein belongs to the bacterial ribosomal protein bL27 family.

The polypeptide is Large ribosomal subunit protein bL27 (rpmA) (Synechocystis sp. (strain ATCC 27184 / PCC 6803 / Kazusa)).